Reading from the N-terminus, the 555-residue chain is Ribonuclease J2 (555 aa).

Zn(2+) is bound by residues histidine 74, histidine 76, histidine 142, and aspartate 164. A substrate-binding site is contributed by 364-368 (HVSGH).

It belongs to the metallo-beta-lactamase superfamily. RNA-metabolizing metallo-beta-lactamase-like family. Bacterial RNase J subfamily. Unclear whether it forms homodimers or belongs to a larger complex. According to probably does not form homodimers, while shows homodimer formation. Both reports show RNase J1 and J2 interaction, probably as a heterotetramer shows it is a component of a possible RNA degradosome complex composed of rny, rnjA, rnjB, pnp, pfkA and eno, while finds no evidence of an RNA degradosome complex. Zn(2+) is required as a cofactor.

The protein resides in the cytoplasm. Its function is as follows. Endonucleolytically cleaves the 5'-leader sequence of certain mRNAs. Endonuclease digestion by the RNase J1/J2 complex occurs at a different site and in some cases more efficiently than J1 or J2 alone. The exonuclease activity of the J1/J2 complex is highly processive on substrates longer than 5 nucleotides, on shorter substrates is distributive. Plays a role in mRNA maturation and stability. Appears to have a limited effect on 16S rRNA maturation, despite its similarity to RNase J1. This subunit alone has very poor 5'-3' exonuclease activity. This chain is Ribonuclease J2, found in Bacillus subtilis (strain 168).